We begin with the raw amino-acid sequence, 325 residues long: Elongation factor P--(R)-beta-lysine ligase (325 aa).

A substrate-binding site is contributed by 76–78; the sequence is SPE. Residues 100 to 102 and Asn109 contribute to the ATP site; that span reads RNE. Tyr118 is a substrate binding site. 244-245 serves as a coordination point for ATP; it reads EL. Position 251 (Glu251) interacts with substrate. Gly300 provides a ligand contact to ATP.

Belongs to the class-II aminoacyl-tRNA synthetase family. EpmA subfamily. As to quaternary structure, homodimer.

The catalysed reaction is D-beta-lysine + L-lysyl-[protein] + ATP = N(6)-((3R)-3,6-diaminohexanoyl)-L-lysyl-[protein] + AMP + diphosphate + H(+). With EpmB is involved in the beta-lysylation step of the post-translational modification of translation elongation factor P (EF-P). Catalyzes the ATP-dependent activation of (R)-beta-lysine produced by EpmB, forming a lysyl-adenylate, from which the beta-lysyl moiety is then transferred to the epsilon-amino group of a conserved specific lysine residue in EF-P. In Hamiltonella defensa subsp. Acyrthosiphon pisum (strain 5AT), this protein is Elongation factor P--(R)-beta-lysine ligase.